We begin with the raw amino-acid sequence, 501 residues long: Glycogenin-2 (501 aa).

The UDP site is built by L42, T44, N45, Y48, and R110. 14 residues coordinate UDP-alpha-D-glucose: L42, T44, N45, Y48, R110, K119, D135, A136, D137, N166, S167, D193, D196, and Q197. UDP is bound by residues D135, A136, and D137. Mn(2+) is bound at residue D135. Mn(2+) is bound at residue D137. O-linked (Glc...) tyrosine glycosylation occurs at Y228. UDP-binding residues include H245, G248, and K251. Mn(2+) is bound at residue H245. UDP-alpha-D-glucose is bound by residues G248 and K251. Phosphoserine is present on residues S368, S399, and S459.

As to quaternary structure, homodimer, tightly complexed to glycogen synthase. It depends on Mn(2+) as a cofactor. Post-translationally, self-glycosylated by the transfer of glucose residues from UDP-glucose to itself, forming an alpha-1,4-glycan of around 10 residues attached to Tyr-228. In terms of tissue distribution, detected in liver (at protein level). Expressed preferentially in liver, heart, and pancreas.

The protein localises to the cytoplasm. It localises to the nucleus. It carries out the reaction L-tyrosyl-[glycogenin] + UDP-alpha-D-glucose = alpha-D-glucosyl-L-tyrosyl-[glycogenin] + UDP + H(+). The catalysed reaction is [1,4-alpha-D-glucosyl](n)-L-tyrosyl-[glycogenin] + UDP-alpha-D-glucose = [1,4-alpha-D-glucosyl](n+1)-L-tyrosyl-[glycogenin] + UDP + H(+). It participates in glycan biosynthesis; glycogen biosynthesis. Functionally, glycogenin participates in the glycogen biosynthetic process along with glycogen synthase and glycogen branching enzyme. It catalyzes the formation of a short alpha (1,4)-glucosyl chain covalently attached via a glucose 1-O-tyrosyl linkage to internal tyrosine residues and these chains act as primers for the elongation reaction catalyzed by glycogen synthase. The sequence is that of Glycogenin-2 (GYG2) from Homo sapiens (Human).